The primary structure comprises 124 residues: Small ribosomal subunit protein uS12 (124 aa).

The interval 8–30 (IRSARQDTEKQTKSPALKSCPQR) is disordered. Aspartate 89 is modified (3-methylthioaspartic acid). The tract at residues 103–124 (DTAGVKDRKQSRSKYGAKKPKA) is disordered. Residues 113–124 (SRSKYGAKKPKA) are compositionally biased toward basic residues.

It belongs to the universal ribosomal protein uS12 family. Part of the 30S ribosomal subunit. Contacts proteins S8 and S17. May interact with IF1 in the 30S initiation complex.

Its function is as follows. With S4 and S5 plays an important role in translational accuracy. Functionally, interacts with and stabilizes bases of the 16S rRNA that are involved in tRNA selection in the A site and with the mRNA backbone. Located at the interface of the 30S and 50S subunits, it traverses the body of the 30S subunit contacting proteins on the other side and probably holding the rRNA structure together. The combined cluster of proteins S8, S12 and S17 appears to hold together the shoulder and platform of the 30S subunit. This Trichodesmium erythraeum (strain IMS101) protein is Small ribosomal subunit protein uS12.